The following is a 193-amino-acid chain: Orotate phosphoribosyltransferase (193 aa).

5-phospho-alpha-D-ribose 1-diphosphate is bound at residue 114–122 (EDVITTGGS). The orotate site is built by threonine 118 and arginine 146.

It belongs to the purine/pyrimidine phosphoribosyltransferase family. PyrE subfamily. As to quaternary structure, homodimer. Requires Mg(2+) as cofactor.

It carries out the reaction orotidine 5'-phosphate + diphosphate = orotate + 5-phospho-alpha-D-ribose 1-diphosphate. It participates in pyrimidine metabolism; UMP biosynthesis via de novo pathway; UMP from orotate: step 1/2. In terms of biological role, catalyzes the transfer of a ribosyl phosphate group from 5-phosphoribose 1-diphosphate to orotate, leading to the formation of orotidine monophosphate (OMP). This chain is Orotate phosphoribosyltransferase, found in Chlorobaculum parvum (strain DSM 263 / NCIMB 8327) (Chlorobium vibrioforme subsp. thiosulfatophilum).